Here is a 245-residue protein sequence, read N- to C-terminus: 1-(5-phosphoribosyl)-5-[(5-phosphoribosylamino)methylideneamino] imidazole-4-carboxamide isomerase (245 aa).

The active-site Proton acceptor is the Asp7. Asp129 acts as the Proton donor in catalysis.

This sequence belongs to the HisA/HisF family.

The protein localises to the cytoplasm. It catalyses the reaction 1-(5-phospho-beta-D-ribosyl)-5-[(5-phospho-beta-D-ribosylamino)methylideneamino]imidazole-4-carboxamide = 5-[(5-phospho-1-deoxy-D-ribulos-1-ylimino)methylamino]-1-(5-phospho-beta-D-ribosyl)imidazole-4-carboxamide. The protein operates within amino-acid biosynthesis; L-histidine biosynthesis; L-histidine from 5-phospho-alpha-D-ribose 1-diphosphate: step 4/9. In Shewanella loihica (strain ATCC BAA-1088 / PV-4), this protein is 1-(5-phosphoribosyl)-5-[(5-phosphoribosylamino)methylideneamino] imidazole-4-carboxamide isomerase.